The chain runs to 283 residues: Aspartate dehydrogenase domain-containing protein (283 aa).

Ser-20 and Ser-168 each carry phosphoserine.

The protein belongs to the L-aspartate dehydrogenase family.

This chain is Aspartate dehydrogenase domain-containing protein, found in Homo sapiens (Human).